The primary structure comprises 284 residues: Pantothenate synthetase (284 aa).

30–37 provides a ligand contact to ATP; the sequence is MGNLHDGH. The active-site Proton donor is the histidine 37. Glutamine 61 contacts (R)-pantoate. Glutamine 61 contributes to the beta-alanine binding site. 149 to 152 contacts ATP; the sequence is GEKD. Glutamine 155 lines the (R)-pantoate pocket. ATP-binding positions include valine 178 and 186–189; that span reads LSSR.

Belongs to the pantothenate synthetase family. In terms of assembly, homodimer.

The protein resides in the cytoplasm. It carries out the reaction (R)-pantoate + beta-alanine + ATP = (R)-pantothenate + AMP + diphosphate + H(+). Its pathway is cofactor biosynthesis; (R)-pantothenate biosynthesis; (R)-pantothenate from (R)-pantoate and beta-alanine: step 1/1. Catalyzes the condensation of pantoate with beta-alanine in an ATP-dependent reaction via a pantoyl-adenylate intermediate. In Photorhabdus laumondii subsp. laumondii (strain DSM 15139 / CIP 105565 / TT01) (Photorhabdus luminescens subsp. laumondii), this protein is Pantothenate synthetase.